Here is a 432-residue protein sequence, read N- to C-terminus: Tryptophan--tRNA ligase (432 aa).

ATP is bound by residues 13–15 (TTS) and 21–22 (GN). Residues 14–22 (TSGTPHLGN) carry the 'HIGH' region motif. D146 contributes to the L-tryptophan binding site. Residues 158–160 (GRD), L198, and 205–209 (KMSKS) contribute to the ATP site. The 'KMSKS' region signature appears at 205–209 (KMSKS).

Belongs to the class-I aminoacyl-tRNA synthetase family. In terms of assembly, homodimer.

It localises to the cytoplasm. It catalyses the reaction tRNA(Trp) + L-tryptophan + ATP = L-tryptophyl-tRNA(Trp) + AMP + diphosphate + H(+). Functionally, catalyzes the attachment of tryptophan to tRNA(Trp). This Xanthomonas axonopodis pv. citri (strain 306) protein is Tryptophan--tRNA ligase.